We begin with the raw amino-acid sequence, 167 residues long: 6,7-dimethyl-8-ribityllumazine synthase (167 aa).

Residues Phe24, 58–60, and 82–84 contribute to the 5-amino-6-(D-ribitylamino)uracil site; these read ALE and AVV. 87-88 provides a ligand contact to (2S)-2-hydroxy-3-oxobutyl phosphate; it reads ET. Catalysis depends on His90, which acts as the Proton donor. Asn115 is a 5-amino-6-(D-ribitylamino)uracil binding site. Arg129 is a binding site for (2S)-2-hydroxy-3-oxobutyl phosphate.

It belongs to the DMRL synthase family.

The catalysed reaction is (2S)-2-hydroxy-3-oxobutyl phosphate + 5-amino-6-(D-ribitylamino)uracil = 6,7-dimethyl-8-(1-D-ribityl)lumazine + phosphate + 2 H2O + H(+). Its pathway is cofactor biosynthesis; riboflavin biosynthesis; riboflavin from 2-hydroxy-3-oxobutyl phosphate and 5-amino-6-(D-ribitylamino)uracil: step 1/2. In terms of biological role, catalyzes the formation of 6,7-dimethyl-8-ribityllumazine by condensation of 5-amino-6-(D-ribitylamino)uracil with 3,4-dihydroxy-2-butanone 4-phosphate. This is the penultimate step in the biosynthesis of riboflavin. The protein is 6,7-dimethyl-8-ribityllumazine synthase of Cupriavidus pinatubonensis (strain JMP 134 / LMG 1197) (Cupriavidus necator (strain JMP 134)).